We begin with the raw amino-acid sequence, 173 residues long: Inorganic pyrophosphatase (173 aa).

Lys-26, Arg-40, and Tyr-52 together coordinate substrate. Residues Asp-62, Asp-67, and Asp-99 each coordinate Mg(2+). Tyr-138 contacts substrate.

It belongs to the PPase family. Homohexamer. The cofactor is Mg(2+).

It localises to the cytoplasm. The enzyme catalyses diphosphate + H2O = 2 phosphate + H(+). Functionally, catalyzes the hydrolysis of inorganic pyrophosphate (PPi) forming two phosphate ions. This chain is Inorganic pyrophosphatase, found in Sulfolobus acidocaldarius (strain ATCC 33909 / DSM 639 / JCM 8929 / NBRC 15157 / NCIMB 11770).